We begin with the raw amino-acid sequence, 235 residues long: Putative cobalt transport protein CbiM 2 (235 aa).

7 helical membrane passes run 9 to 29, 41 to 61, 80 to 100, 107 to 127, 135 to 155, 160 to 180, and 181 to 201; these read PAGW…MGII, YLPL…LKLP, FGYC…ALLL, TMGA…YAVY, INIY…TYII, LALA…AFFS, and IFAI…ALVF.

The protein belongs to the CbiM family. Forms an energy-coupling factor (ECF) transporter complex composed of an ATP-binding protein (A component, CbiO), a transmembrane protein (T component, CbiQ) and 2 possible substrate-capture proteins (S components, CbiM and CbiN) of unknown stoichimetry.

The protein localises to the cell membrane. It functions in the pathway cofactor biosynthesis; adenosylcobalamin biosynthesis. In terms of biological role, part of the energy-coupling factor (ECF) transporter complex CbiMNOQ involved in cobalt import. In Methanosphaerula palustris (strain ATCC BAA-1556 / DSM 19958 / E1-9c), this protein is Putative cobalt transport protein CbiM 2.